The primary structure comprises 135 residues: Large ribosomal subunit protein uL16c (135 aa).

Over residues 1-17 (MLSPKRTRFRKQHRGRM) the composition is skewed to basic residues. Positions 1-21 (MLSPKRTRFRKQHRGRMKGVS) are disordered.

Belongs to the universal ribosomal protein uL16 family. As to quaternary structure, part of the 50S ribosomal subunit.

The protein localises to the plastid. It localises to the chloroplast. This is Large ribosomal subunit protein uL16c from Amborella trichopoda.